Reading from the N-terminus, the 72-residue chain is Prokaryotic ubiquitin-like protein Pup (72 aa).

Residues 1-10 are compositionally biased toward gly residues; the sequence is MATRDSGGGQ. The disordered stretch occupies residues 1-41; that stretch reads MATRDSGGGQQRADRRAEEIDDVATEDTSASDLKERHEKLS. A coiled-coil region spans residues 27–61; the sequence is DTSASDLKERHEKLSEDVDSLLDEIDDVLEENAEE. An ARC ATPase binding region spans residues 28-66; the sequence is TSASDLKERHEKLSEDVDSLLDEIDDVLEENAEEFVKGY. Residues 32 to 41 show a composition bias toward basic and acidic residues; the sequence is DLKERHEKLS. Residue Q72 is modified to Deamidated glutamine. Residue Q72 forms an Isoglutamyl lysine isopeptide (Gln-Lys) (interchain with K-? in acceptor proteins) linkage.

This sequence belongs to the prokaryotic ubiquitin-like protein family. As to quaternary structure, strongly interacts with the proteasome-associated ATPase ARC through a hydrophobic interface; the interacting region of Pup lies in its C-terminal half. There is one Pup binding site per ARC hexamer ring. In terms of processing, is modified by deamidation of its C-terminal glutamine to glutamate by the deamidase Dop, a prerequisite to the subsequent pupylation process.

It functions in the pathway protein degradation; proteasomal Pup-dependent pathway. In terms of biological role, protein modifier that is covalently attached to lysine residues of substrate proteins, thereby targeting them for proteasomal degradation. The tagging system is termed pupylation. The polypeptide is Prokaryotic ubiquitin-like protein Pup (Frankia casuarinae (strain DSM 45818 / CECT 9043 / HFP020203 / CcI3)).